We begin with the raw amino-acid sequence, 340 residues long: Cobalt-precorrin-5B C(1)-methyltransferase (340 aa).

The protein belongs to the CbiD family.

It carries out the reaction Co-precorrin-5B + S-adenosyl-L-methionine = Co-precorrin-6A + S-adenosyl-L-homocysteine. It functions in the pathway cofactor biosynthesis; adenosylcobalamin biosynthesis; cob(II)yrinate a,c-diamide from sirohydrochlorin (anaerobic route): step 6/10. Catalyzes the methylation of C-1 in cobalt-precorrin-5B to form cobalt-precorrin-6A. The polypeptide is Cobalt-precorrin-5B C(1)-methyltransferase (Pyrobaculum aerophilum (strain ATCC 51768 / DSM 7523 / JCM 9630 / CIP 104966 / NBRC 100827 / IM2)).